Here is a 213-residue protein sequence, read N- to C-terminus: tRNA (guanine-N(7)-)-methyltransferase (213 aa).

S-adenosyl-L-methionine-binding residues include Glu43, Asp68, Asn95, and Asn117. Residues Asp153 and 190–193 contribute to the substrate site; that span reads TEYE.

This sequence belongs to the class I-like SAM-binding methyltransferase superfamily. TrmB family.

The catalysed reaction is guanosine(46) in tRNA + S-adenosyl-L-methionine = N(7)-methylguanosine(46) in tRNA + S-adenosyl-L-homocysteine. Its pathway is tRNA modification; N(7)-methylguanine-tRNA biosynthesis. Its function is as follows. Catalyzes the formation of N(7)-methylguanine at position 46 (m7G46) in tRNA. The polypeptide is tRNA (guanine-N(7)-)-methyltransferase (Desulfitobacterium hafniense (strain DSM 10664 / DCB-2)).